Here is a 457-residue protein sequence, read N- to C-terminus: Putative movement protein (457 aa).

3 disordered regions span residues 265 to 284 (SGSR…LERS), 293 to 312 (FRSQ…SDFE), and 345 to 457 (ARQD…PPSV). Residues 411–426 (RAGGGEIHGGSEGGGV) show a composition bias toward gly residues. Basic and acidic residues predominate over residues 448–457 (YKQHDLPPSV).

This sequence belongs to the tobamoviruses movement protein family.

Functionally, suppressor of viral-induced RNA silencing. This Crataegus (hawthorn) protein is Putative movement protein.